We begin with the raw amino-acid sequence, 299 residues long: Taste receptor type 2 member 50 (299 aa).

Residue methionine 1 is a topological domain, extracellular. Residues 2–22 (ITFLYIFFSILIMVLFVLGNF) traverse the membrane as a helical segment. At 23–55 (ANGFIALVNFIDWVKRKKISSADQILTALAVSR) the chain is on the cytoplasmic side. The helical transmembrane segment at 56-76 (IGLLWALLLNWYLTVLNPAFY) threads the bilayer. Residues 77-87 (SVELRITSYNA) are Extracellular-facing. The chain crosses the membrane as a helical span at residues 88-108 (WVVTNHFSMWLAANLSIFYLL). At 109–126 (KIANFSNLLFLHLKRRVR) the chain is on the cytoplasmic side. The helical transmembrane segment at 127–147 (SVILVILLGTLIFLVCHLLVA) threads the bilayer. At 148–181 (NMDESMWAEEYEGNMTGKMKLRNTVHLSYLTVTT) the chain is on the extracellular side. N-linked (GlcNAc...) asparagine glycosylation occurs at asparagine 161. A helical membrane pass occupies residues 182-202 (LWSFIPFTLSLISFLMLICSL). Topologically, residues 203 to 229 (CKHLKKMQLHGEGSQDLSTKVHIKALQ) are cytoplasmic. Residues 230 to 250 (TLISFLLLCAIFFLFLIVSVW) traverse the membrane as a helical segment. Topologically, residues 251–259 (SPRRLRNDP) are extracellular. Residues 260–280 (VVMVSKAVGNIYLAFDSFILI) form a helical membrane-spanning segment. Over 281–299 (WRTKKLKHTFLLILCQIRC) the chain is Cytoplasmic.

This sequence belongs to the G-protein coupled receptor T2R family. Expressed in subsets of taste receptor cells of the tongue and exclusively in gustducin-positive cells.

It is found in the membrane. In terms of biological role, receptor that may play a role in the perception of bitterness and is gustducin-linked. May play a role in sensing the chemical composition of the gastrointestinal content. The activity of this receptor may stimulate alpha gustducin, mediate PLC-beta-2 activation and lead to the gating of TRPM5. This chain is Taste receptor type 2 member 50 (TAS2R50), found in Homo sapiens (Human).